Here is a 294-residue protein sequence, read N- to C-terminus: Probable porphobilinogen deaminase (294 aa).

C233 is modified (S-(dipyrrolylmethanemethyl)cysteine).

Belongs to the HMBS family. Requires dipyrromethane as cofactor.

It carries out the reaction 4 porphobilinogen + H2O = hydroxymethylbilane + 4 NH4(+). It functions in the pathway porphyrin-containing compound metabolism; protoporphyrin-IX biosynthesis; coproporphyrinogen-III from 5-aminolevulinate: step 2/4. Tetrapolymerization of the monopyrrole PBG into the hydroxymethylbilane pre-uroporphyrinogen in several discrete steps. This chain is Probable porphobilinogen deaminase, found in Sulfurisphaera tokodaii (strain DSM 16993 / JCM 10545 / NBRC 100140 / 7) (Sulfolobus tokodaii).